A 254-amino-acid chain; its full sequence is MTAKTIDLNADLGESFGHYTMGNDSAMLDIVTSANVACGFHGGDPEVMAETFRIAREKGVSVGSHPGFPDLWGFGRRVMPFTPAQIERIVAYQIGAAQALATYSGHRMTYMKTHGALGNLTERDPAVAEAIVNAVKAVDANLPIMAIALSHLERIGRERGLTVFSEIFADRAYTEDGHLVSRKEPGAVLHDADFAAARAVRMVQNGAIETISGKMLPTRIDTICVHGDNAESVEVARKVRAGFEAAGIAVRALT.

The protein belongs to the LamB/PxpA family. Forms a complex composed of PxpA, PxpB and PxpC.

It catalyses the reaction 5-oxo-L-proline + ATP + 2 H2O = L-glutamate + ADP + phosphate + H(+). Functionally, catalyzes the cleavage of 5-oxoproline to form L-glutamate coupled to the hydrolysis of ATP to ADP and inorganic phosphate. This is 5-oxoprolinase subunit A from Gluconobacter oxydans (strain 621H) (Gluconobacter suboxydans).